A 242-amino-acid polypeptide reads, in one-letter code: Cell division protein FtsQ (242 aa).

At 1–12 (MWDNAEAMERLT) the chain is on the cytoplasmic side. Residues 13 to 32 (RWLLVMMAMLLAASGLVWFY) traverse the membrane as a helical segment. At 33–242 (NSNHLPVKQV…DGLPEKESEE (210 aa)) the chain is on the periplasmic side. The POTRA domain occupies 37-106 (LPVKQVSLKG…DTVEVVLTER (70 aa)).

Belongs to the FtsQ/DivIB family. FtsQ subfamily. In terms of assembly, part of a complex composed of FtsB, FtsL and FtsQ.

The protein resides in the cell inner membrane. In terms of biological role, essential cell division protein. May link together the upstream cell division proteins, which are predominantly cytoplasmic, with the downstream cell division proteins, which are predominantly periplasmic. May control correct divisome assembly. This chain is Cell division protein FtsQ, found in Neisseria gonorrhoeae (strain ATCC 700825 / FA 1090).